Consider the following 276-residue polypeptide: Hemin import ATP-binding protein HmuV (276 aa).

Residues 2–259 (LTAHHLDVAR…AHIAQCYGFA (258 aa)) enclose the ABC transporter domain. ATP is bound at residue 34-41 (GRNGAGKS).

Belongs to the ABC transporter superfamily. Heme (hemin) importer (TC 3.A.1.14.5) family. As to quaternary structure, the complex is composed of two ATP-binding proteins (HmuV), two transmembrane proteins (HmuU) and a solute-binding protein (HmuT).

It localises to the cell inner membrane. Part of the ABC transporter complex HmuTUV involved in hemin import. Responsible for energy coupling to the transport system. In Burkholderia cenocepacia (strain HI2424), this protein is Hemin import ATP-binding protein HmuV.